The primary structure comprises 863 residues: DNA ligase (863 aa).

NAD(+)-binding positions include 76 to 80 (DAAYD), 125 to 126 (SL), and Glu159. The active-site N6-AMP-lysine intermediate is Lys161. NAD(+) contacts are provided by Arg182 and Glu221. A disordered region spans residues 237-256 (EDAGRPPFANPRNAAAGSLR). A compositionally biased stretch (low complexity) spans 241-253 (RPPFANPRNAAAG). Positions 346 and 370 each coordinate NAD(+). 4 residues coordinate Zn(2+): Cys467, Cys470, Cys486, and Cys492. Residues 781-863 (GLPQTLEGKS…DTLLATGDVQ (83 aa)) form the BRCT domain.

This sequence belongs to the NAD-dependent DNA ligase family. LigA subfamily. Mg(2+) serves as cofactor. It depends on Mn(2+) as a cofactor.

It carries out the reaction NAD(+) + (deoxyribonucleotide)n-3'-hydroxyl + 5'-phospho-(deoxyribonucleotide)m = (deoxyribonucleotide)n+m + AMP + beta-nicotinamide D-nucleotide.. In terms of biological role, DNA ligase that catalyzes the formation of phosphodiester linkages between 5'-phosphoryl and 3'-hydroxyl groups in double-stranded DNA using NAD as a coenzyme and as the energy source for the reaction. It is essential for DNA replication and repair of damaged DNA. The protein is DNA ligase of Bifidobacterium animalis subsp. lactis (strain AD011).